The chain runs to 421 residues: 4-methylaminobutanoate oxidase (methylamine-forming) (421 aa).

Residues Glu-31, Arg-33, Arg-39, and Glu-379 each contribute to the FAD site.

The protein belongs to the flavin monoamine oxidase family. Monomer. FAD is required as a cofactor.

The catalysed reaction is 4-(methylamino)butanoate + O2 + H2O = succinate semialdehyde + methylamine + H2O2. Its pathway is alkaloid degradation; nicotine degradation. Functionally, catalyzes the removal of methylamine from 4-methylaminobutanoate with the formation of succinate semialdehyde. Is involved in the catabolism of 4-methylaminobutanoate produced from nicotine. Has a very weak monoamine oxidase activity with 4-aminobutanoate. Cannot use spermidine, spermine, sarcosine, dimethylglycine, glycine, choline, betaine, alpha-methylamino isobutyrate, methylamine propionitrile and methylamino propylamine as substrate. The polypeptide is 4-methylaminobutanoate oxidase (methylamine-forming) (mao) (Paenarthrobacter nicotinovorans (Arthrobacter nicotinovorans)).